Here is a 102-residue protein sequence, read N- to C-terminus: Small ribosomal subunit protein uS10 (102 aa).

It belongs to the universal ribosomal protein uS10 family. Part of the 30S ribosomal subunit.

Involved in the binding of tRNA to the ribosomes. This chain is Small ribosomal subunit protein uS10, found in Cereibacter sphaeroides (strain ATCC 17029 / ATH 2.4.9) (Rhodobacter sphaeroides).